The chain runs to 95 residues: MPKRKSPENAEGKDGAKLTKQEPTRRSARLSAKPVPPKPEPKPRKTSAKKEPGTKINRAAKGKKEEKQEAGKEGTAPSANGDTKAEEVLSTNASH.

Basic and acidic residues-rich tracts occupy residues 1–25 (MPKR…EPTR), 39–53 (PEPK…KEPG), and 62–72 (GKKEEKQEAGK). Residues 1–95 (MPKRKSPENA…EEVLSTNASH (95 aa)) are disordered. The residue at position 6 (serine 6) is a Phosphoserine. Serine 78 bears the Phosphoserine mark.

Belongs to the HMGN family. As to quaternary structure, interacts with the ligand binding domain of the thyroid receptor (TR) (in vitro). Requires the presence of thyroid hormone for its interaction. Interacts with transcriptional regulator SEHBP. Interacts with nucleosomes.

It is found in the nucleus. In terms of biological role, binds to nucleosomes, regulating chromatin structure and consequently, chromatin-dependent processes such as transcription, DNA replication and DNA repair. Affects both insulin and glucagon levels and modulates the expression of pancreatic genes involved in insulin secretion. Regulates the expression of the glucose transporter SLC2A2 by binding specifically to its promoter region and recruiting PDX1 and additional transcription factors. Regulates the expression of SLC6A9, a glycine transporter which regulates the glycine concentration in synaptic junctions in the central nervous system, by binding to its transcription start site. May play a role in ocular development and astrocyte function. The protein is High mobility group nucleosome-binding domain-containing protein 3 (Hmgn3) of Rattus norvegicus (Rat).